The sequence spans 121 residues: MALNIEEIIASVKEATVLELNDLVKAIEEEFGVTAAAPVAVAAAGGAAAEEKTDFDLVLAGAGDQKIKVIKVVREITGLGLKEAKELVDNTPKPLKEGIAKEEAEELKAKLEEVGASVEVK.

Belongs to the bacterial ribosomal protein bL12 family. In terms of assembly, homodimer. Part of the ribosomal stalk of the 50S ribosomal subunit. Forms a multimeric L10(L12)X complex, where L10 forms an elongated spine to which 2 to 4 L12 dimers bind in a sequential fashion. Binds GTP-bound translation factors.

Its function is as follows. Forms part of the ribosomal stalk which helps the ribosome interact with GTP-bound translation factors. Is thus essential for accurate translation. In Bacillus pumilus (strain SAFR-032), this protein is Large ribosomal subunit protein bL12.